Reading from the N-terminus, the 138-residue chain is Large ribosomal subunit protein uL16 (138 aa).

Belongs to the universal ribosomal protein uL16 family. Part of the 50S ribosomal subunit.

In terms of biological role, binds 23S rRNA and is also seen to make contacts with the A and possibly P site tRNAs. In Chlamydia trachomatis serovar D (strain ATCC VR-885 / DSM 19411 / UW-3/Cx), this protein is Large ribosomal subunit protein uL16.